A 101-amino-acid chain; its full sequence is Large ribosomal subunit protein bL28 (101 aa).

The protein belongs to the bacterial ribosomal protein bL28 family.

The sequence is that of Large ribosomal subunit protein bL28 from Rhodopseudomonas palustris (strain ATCC BAA-98 / CGA009).